The sequence spans 231 residues: Large ribosomal subunit protein uL1 (231 aa).

Belongs to the universal ribosomal protein uL1 family. In terms of assembly, part of the 50S ribosomal subunit.

In terms of biological role, binds directly to 23S rRNA. The L1 stalk is quite mobile in the ribosome, and is involved in E site tRNA release. Protein L1 is also a translational repressor protein, it controls the translation of the L11 operon by binding to its mRNA. This is Large ribosomal subunit protein uL1 from Polaromonas sp. (strain JS666 / ATCC BAA-500).